The sequence spans 915 residues: Protein translocase subunit SecA (915 aa).

Residues Q87, 105–109, and D512 contribute to the ATP site; that span reads GEGKT. Positions 881 to 915 are disordered; the sequence is LPGTAPVRPEPKIGRNEPCPCGSGKKYKHCHGQLN. Residues C899, C901, C910, and H911 each contribute to the Zn(2+) site. Basic residues predominate over residues 905 to 915; it reads KKYKHCHGQLN.

Belongs to the SecA family. Monomer and homodimer. Part of the essential Sec protein translocation apparatus which comprises SecA, SecYEG and auxiliary proteins SecDF-YajC and YidC. The cofactor is Zn(2+).

It is found in the cell inner membrane. The protein resides in the cytoplasm. The catalysed reaction is ATP + H2O + cellular proteinSide 1 = ADP + phosphate + cellular proteinSide 2.. Part of the Sec protein translocase complex. Interacts with the SecYEG preprotein conducting channel. Has a central role in coupling the hydrolysis of ATP to the transfer of proteins into and across the cell membrane, serving both as a receptor for the preprotein-SecB complex and as an ATP-driven molecular motor driving the stepwise translocation of polypeptide chains across the membrane. The sequence is that of Protein translocase subunit SecA from Azotobacter vinelandii (strain DJ / ATCC BAA-1303).